Here is a 472-residue protein sequence, read N- to C-terminus: ATP synthase subunit beta (472 aa).

150–157 contacts ATP; sequence GGAGVGKT.

It belongs to the ATPase alpha/beta chains family. F-type ATPases have 2 components, CF(1) - the catalytic core - and CF(0) - the membrane proton channel. CF(1) has five subunits: alpha(3), beta(3), gamma(1), delta(1), epsilon(1). CF(0) has four main subunits: a, b, b' and c.

Its subcellular location is the cellular chromatophore membrane. The catalysed reaction is ATP + H2O + 4 H(+)(in) = ADP + phosphate + 5 H(+)(out). Produces ATP from ADP in the presence of a proton gradient across the membrane. The catalytic sites are hosted primarily by the beta subunits. The polypeptide is ATP synthase subunit beta (Rhodobacter capsulatus (Rhodopseudomonas capsulata)).